The sequence spans 330 residues: Protein RecA (330 aa).

66–73 (GPESSGKT) is a binding site for ATP.

It belongs to the RecA family.

Its subcellular location is the cytoplasm. In terms of biological role, can catalyze the hydrolysis of ATP in the presence of single-stranded DNA, the ATP-dependent uptake of single-stranded DNA by duplex DNA, and the ATP-dependent hybridization of homologous single-stranded DNAs. It interacts with LexA causing its activation and leading to its autocatalytic cleavage. The polypeptide is Protein RecA (Bacteroides thetaiotaomicron (strain ATCC 29148 / DSM 2079 / JCM 5827 / CCUG 10774 / NCTC 10582 / VPI-5482 / E50)).